The chain runs to 170 residues: uncharacterized protein (170 aa).

A VOC domain is found at 25–151; the sequence is PALSPHLVVD…FGHHWSLGQP (127 aa).

This is an uncharacterized protein from Mycobacterium tuberculosis (strain CDC 1551 / Oshkosh).